Consider the following 342-residue polypeptide: scyllo-inositol 2-dehydrogenase (NAD(+)) (342 aa).

It belongs to the Gfo/Idh/MocA family.

It carries out the reaction scyllo-inositol + NAD(+) = scyllo-inosose + NADH + H(+). The protein operates within polyol metabolism. In terms of biological role, catalyzes the reversible NAD(+)-dependent oxidation of scyllo-inositol (SI) to 2,4,6/3,5-pentahydroxycyclohexanone (scyllo-inosose or SIS). Is required for SI catabolism that allows B.subtilis to utilize SI as the sole carbon source for growth. Cannot use NADP(+) instead of NAD(+). This is scyllo-inositol 2-dehydrogenase (NAD(+)) from Bacillus subtilis (strain 168).